Consider the following 545-residue polypeptide: CTP synthase (545 aa).

Residues 1 to 266 (MTHFIFVTGG…DDLICERFGF (266 aa)) form an amidoligase domain region. Residue S13 participates in CTP binding. S13 contacts UTP. ATP is bound by residues 14–19 (SLGKGI) and D71. Mg(2+) contacts are provided by D71 and E140. Residues 147 to 149 (DIE), 187 to 192 (KTKPTQ), and K223 contribute to the CTP site. UTP contacts are provided by residues 187 to 192 (KTKPTQ) and K223. 239–241 (KDA) lines the ATP pocket. A Glutamine amidotransferase type-1 domain is found at 292-543 (RVAMVGKYVE…IDAAKTQHQK (252 aa)). G353 contributes to the L-glutamine binding site. The active-site Nucleophile; for glutamine hydrolysis is C380. Residues 381–384 (LGMQ), E404, and R471 contribute to the L-glutamine site. Catalysis depends on residues H516 and E518.

This sequence belongs to the CTP synthase family. As to quaternary structure, homotetramer.

It catalyses the reaction UTP + L-glutamine + ATP + H2O = CTP + L-glutamate + ADP + phosphate + 2 H(+). The catalysed reaction is L-glutamine + H2O = L-glutamate + NH4(+). It carries out the reaction UTP + NH4(+) + ATP = CTP + ADP + phosphate + 2 H(+). It participates in pyrimidine metabolism; CTP biosynthesis via de novo pathway; CTP from UDP: step 2/2. With respect to regulation, allosterically activated by GTP, when glutamine is the substrate; GTP has no effect on the reaction when ammonia is the substrate. The allosteric effector GTP functions by stabilizing the protein conformation that binds the tetrahedral intermediate(s) formed during glutamine hydrolysis. Inhibited by the product CTP, via allosteric rather than competitive inhibition. Functionally, catalyzes the ATP-dependent amination of UTP to CTP with either L-glutamine or ammonia as the source of nitrogen. Regulates intracellular CTP levels through interactions with the four ribonucleotide triphosphates. This Acinetobacter baumannii (strain AB307-0294) protein is CTP synthase.